A 111-amino-acid chain; its full sequence is Thioredoxin 2 (111 aa).

One can recognise a Thioredoxin domain in the interval 2-109; it reads SKGVITITDA…LLSFLDTHLN (108 aa). A disulfide bridge links Cys-33 with Cys-36.

This sequence belongs to the thioredoxin family.

In terms of biological role, participates in various redox reactions through the reversible oxidation of its active center dithiol to a disulfide and catalyzes dithiol-disulfide exchange reactions. The polypeptide is Thioredoxin 2 (trxB) (Nostoc sp. (strain PCC 7120 / SAG 25.82 / UTEX 2576)).